Consider the following 213-residue polypeptide: Holliday junction branch migration complex subunit RuvA (213 aa).

The tract at residues 1-63 is domain I; sequence MIGMLTGRVA…EDAFKLYGFL (63 aa). A domain II region spans residues 64-142; it reads DDIDRAWFVH…PTGRSFSIGL (79 aa). The flexible linker stretch occupies residues 143 to 160; it reads PVHSDDGTTGGAPVAPAG. A domain III region spans residues 161-213; that stretch reads GDSLAREDAVSALVNLGYNESQARQAVAKILRDADSEAPLGDVIRLSLKELAA.

It belongs to the RuvA family. Homotetramer. Forms an RuvA(8)-RuvB(12)-Holliday junction (HJ) complex. HJ DNA is sandwiched between 2 RuvA tetramers; dsDNA enters through RuvA and exits via RuvB. An RuvB hexamer assembles on each DNA strand where it exits the tetramer. Each RuvB hexamer is contacted by two RuvA subunits (via domain III) on 2 adjacent RuvB subunits; this complex drives branch migration. In the full resolvosome a probable DNA-RuvA(4)-RuvB(12)-RuvC(2) complex forms which resolves the HJ.

It is found in the cytoplasm. In terms of biological role, the RuvA-RuvB-RuvC complex processes Holliday junction (HJ) DNA during genetic recombination and DNA repair, while the RuvA-RuvB complex plays an important role in the rescue of blocked DNA replication forks via replication fork reversal (RFR). RuvA specifically binds to HJ cruciform DNA, conferring on it an open structure. The RuvB hexamer acts as an ATP-dependent pump, pulling dsDNA into and through the RuvAB complex. HJ branch migration allows RuvC to scan DNA until it finds its consensus sequence, where it cleaves and resolves the cruciform DNA. The chain is Holliday junction branch migration complex subunit RuvA from Maricaulis maris (strain MCS10) (Caulobacter maris).